Here is a 768-residue protein sequence, read N- to C-terminus: DNA ligase (768 aa).

Positions 1 to 11 (MSPSAPANSAP) are enriched in low complexity. The interval 1 to 28 (MSPSAPANSAPDPDRNGVPDVGPASAAP) is disordered. NAD(+)-binding positions include 62–66 (DAEYD), 111–112 (SI), and E148. The N6-AMP-lysine intermediate role is filled by K150. NAD(+) is bound by residues R171, E238, K361, and K385. 4 residues coordinate Zn(2+): C484, C487, C502, and C508. The 90-residue stretch at 670 to 759 (AAELPLAGKT…EADADADAEG (90 aa)) folds into the BRCT domain.

Belongs to the NAD-dependent DNA ligase family. LigA subfamily. Requires Mg(2+) as cofactor. Mn(2+) is required as a cofactor.

The catalysed reaction is NAD(+) + (deoxyribonucleotide)n-3'-hydroxyl + 5'-phospho-(deoxyribonucleotide)m = (deoxyribonucleotide)n+m + AMP + beta-nicotinamide D-nucleotide.. In terms of biological role, DNA ligase that catalyzes the formation of phosphodiester linkages between 5'-phosphoryl and 3'-hydroxyl groups in double-stranded DNA using NAD as a coenzyme and as the energy source for the reaction. It is essential for DNA replication and repair of damaged DNA. The chain is DNA ligase from Leptothrix cholodnii (strain ATCC 51168 / LMG 8142 / SP-6) (Leptothrix discophora (strain SP-6)).